Consider the following 534-residue polypeptide: Inosine-5'-monophosphate dehydrogenase (534 aa).

2 consecutive CBS domains span residues 117–181 (YVMQ…GTPI) and 190–255 (TTPI…PMAS). Residues 292–294 (DSS) and 342–344 (GMG) each bind NAD(+). Gly344 and Gly346 together coordinate K(+). Ser347 is a binding site for IMP. Cys349 is a binding site for K(+). Cys349 functions as the Thioimidate intermediate in the catalytic mechanism. Residues 382–384 (DGG), 405–406 (GG), and 430–434 (YRGMG) contribute to the IMP site. Arg448 acts as the Proton acceptor in catalysis. Gln461 provides a ligand contact to IMP. K(+)-binding residues include Glu520, Gly521, and Gly522.

It belongs to the IMPDH/GMPR family. As to quaternary structure, homotetramer. Requires K(+) as cofactor.

Its subcellular location is the cytoplasm. The catalysed reaction is IMP + NAD(+) + H2O = XMP + NADH + H(+). It functions in the pathway purine metabolism; XMP biosynthesis via de novo pathway; XMP from IMP: step 1/1. With respect to regulation, mycophenolic acid (MPA) is a non-competitive inhibitor that prevents formation of the closed enzyme conformation by binding to the same site as the amobile flap. In contrast, mizoribine monophosphate (MZP) is a competitive inhibitor that induces the closed conformation. MPA is a potent inhibitor of mammalian IMPDHs but a poor inhibitor of the bacterial enzymes. MZP is a more potent inhibitor of bacterial IMPDH. In terms of biological role, catalyzes the conversion of inosine 5'-phosphate (IMP) to xanthosine 5'-phosphate (XMP), the first committed and rate-limiting step in the de novo synthesis of guanine nucleotides, and therefore plays an important role in the regulation of cell growth. The protein is Inosine-5'-monophosphate dehydrogenase of Caenorhabditis elegans.